Here is a 71-residue protein sequence, read N- to C-terminus: UPF0499 protein ACLA_083080 (71 aa).

The N-terminal stretch at 1-18 (MKFLNILTLAFITGMASA) is a signal peptide. Intrachain disulfides connect Cys-44–Cys-58, Cys-48–Cys-61, and Cys-54–Cys-68.

Belongs to the UPF0499 family.

It localises to the secreted. The polypeptide is UPF0499 protein ACLA_083080 (Aspergillus clavatus (strain ATCC 1007 / CBS 513.65 / DSM 816 / NCTC 3887 / NRRL 1 / QM 1276 / 107)).